The chain runs to 542 residues: CTP synthase (542 aa).

The segment at 1–265 is amidoligase domain; that stretch reads MARYIFITGG…DQEVLSAFGI (265 aa). Residue Ser-13 participates in CTP binding. UTP is bound at residue Ser-13. 14–19 is an ATP binding site; the sequence is SLGKGL. Tyr-54 contributes to the L-glutamine binding site. Asp-71 is a binding site for ATP. Mg(2+)-binding residues include Asp-71 and Glu-139. Residues 146–148, 186–191, and Lys-222 each bind CTP; these read DIE and KTKPTQ. UTP-binding positions include 186 to 191 and Lys-222; that span reads KTKPTQ. 238-240 contacts ATP; that stretch reads RDV. A Glutamine amidotransferase type-1 domain is found at 291 to 541; it reads TIAIVGKYTG…IAAAMEQSRL (251 aa). Gly-353 lines the L-glutamine pocket. Cys-380 (nucleophile; for glutamine hydrolysis) is an active-site residue. L-glutamine-binding positions include 381–384, Glu-404, and Arg-469; that span reads FGMQ. Catalysis depends on residues His-514 and Glu-516.

The protein belongs to the CTP synthase family. Homotetramer.

The catalysed reaction is UTP + L-glutamine + ATP + H2O = CTP + L-glutamate + ADP + phosphate + 2 H(+). It carries out the reaction L-glutamine + H2O = L-glutamate + NH4(+). The enzyme catalyses UTP + NH4(+) + ATP = CTP + ADP + phosphate + 2 H(+). It participates in pyrimidine metabolism; CTP biosynthesis via de novo pathway; CTP from UDP: step 2/2. Allosterically activated by GTP, when glutamine is the substrate; GTP has no effect on the reaction when ammonia is the substrate. The allosteric effector GTP functions by stabilizing the protein conformation that binds the tetrahedral intermediate(s) formed during glutamine hydrolysis. Inhibited by the product CTP, via allosteric rather than competitive inhibition. Catalyzes the ATP-dependent amination of UTP to CTP with either L-glutamine or ammonia as the source of nitrogen. Regulates intracellular CTP levels through interactions with the four ribonucleotide triphosphates. The polypeptide is CTP synthase (Beijerinckia indica subsp. indica (strain ATCC 9039 / DSM 1715 / NCIMB 8712)).